Consider the following 561-residue polypeptide: Carboxylesterase patB (561 aa).

Positions 1 to 19 (MQIINWASLLLVTWETVVA) are cleaved as a signal peptide. 3 N-linked (GlcNAc...) asparagine glycosylation sites follow: asparagine 38, asparagine 69, and asparagine 109. The active-site Acyl-ester intermediate is the serine 263. Residue serine 263 participates in substrate binding. A glycan (N-linked (GlcNAc...) asparagine) is linked at asparagine 316. The active-site Charge relay system is the glutamate 385. N-linked (GlcNAc...) asparagine glycosylation is found at asparagine 393, asparagine 412, asparagine 429, and asparagine 496.

Belongs to the type-B carboxylesterase/lipase family.

Its subcellular location is the cytoplasm. The protein resides in the cytosol. It carries out the reaction a carboxylic ester + H2O = an alcohol + a carboxylate + H(+). Its pathway is mycotoxin biosynthesis; patulin biosynthesis. Carboxylesterase; part of the gene cluster that mediates the biosynthesis of patulin, an acetate-derived tetraketide mycotoxin produced by several fungal species that shows antimicrobial properties against several bacteria. The function of patB in patulin synthesis has still to be characterized. The pathway begins with the synthesis of 6-methylsalicylic acid by the polyketide synthase (PKS) patK via condensation of acetate and malonate units. The 6-methylsalicylic acid decarboxylase patG then catalyzes the decarboxylation of 6-methylsalicylic acid to yield m-cresol (also known as 3-methylphenol). These first reactions occur in the cytosol. The intermediate m-cresol is then transported into the endoplasmic reticulum where the cytochrome P450 monooxygenase patH converts it to m-hydroxybenzyl alcohol, which is further converted to gentisyl alcohol by the cytochrome P450 monooxygenase patI. The oxidoreductases patJ and patO further convert gentisyl alcohol to isoepoxydon in the vacuole. PatN catalyzes then the transformation of isoepoxydon into phyllostine. The cluster protein patF is responsible for the conversion from phyllostine to neopatulin whereas the alcohol dehydrogenase patD converts neopatulin to E-ascladiol. The steps between isoepoxydon and E-ascladiol occur in the cytosol, and E-ascladiol is probably secreted to the extracellular space by one of the cluster-specific transporters patC or patM. Finally, the secreted patulin synthase patE catalyzes the conversion of E-ascladiol to patulin. This chain is Carboxylesterase patB, found in Penicillium expansum (Blue mold rot fungus).